We begin with the raw amino-acid sequence, 169 residues long: Crossover junction endodeoxyribonuclease RuvC (169 aa).

Residues Asp15, Glu75, and Asp147 contribute to the active site. Positions 15, 75, and 147 each coordinate Mg(2+).

It belongs to the RuvC family. In terms of assembly, homodimer which binds Holliday junction (HJ) DNA. The HJ becomes 2-fold symmetrical on binding to RuvC with unstacked arms; it has a different conformation from HJ DNA in complex with RuvA. In the full resolvosome a probable DNA-RuvA(4)-RuvB(12)-RuvC(2) complex forms which resolves the HJ. Mg(2+) serves as cofactor.

It is found in the cytoplasm. It carries out the reaction Endonucleolytic cleavage at a junction such as a reciprocal single-stranded crossover between two homologous DNA duplexes (Holliday junction).. Its function is as follows. The RuvA-RuvB-RuvC complex processes Holliday junction (HJ) DNA during genetic recombination and DNA repair. Endonuclease that resolves HJ intermediates. Cleaves cruciform DNA by making single-stranded nicks across the HJ at symmetrical positions within the homologous arms, yielding a 5'-phosphate and a 3'-hydroxyl group; requires a central core of homology in the junction. The consensus cleavage sequence is 5'-(A/T)TT(C/G)-3'. Cleavage occurs on the 3'-side of the TT dinucleotide at the point of strand exchange. HJ branch migration catalyzed by RuvA-RuvB allows RuvC to scan DNA until it finds its consensus sequence, where it cleaves and resolves the cruciform DNA. The chain is Crossover junction endodeoxyribonuclease RuvC from Caulobacter vibrioides (strain ATCC 19089 / CIP 103742 / CB 15) (Caulobacter crescentus).